We begin with the raw amino-acid sequence, 488 residues long: L-amino oxidase (488 aa).

FAD is bound by residues 60-61 (MS), 80-81 (EA), Arg88, and 104-107 (GPMR). Arg107 and Tyr388 together coordinate substrate. Cysteines 347 and 428 form a disulfide. Residues Glu474 and 481–486 (GWIDST) contribute to the FAD site. Residue 481 to 482 (GW) participates in substrate binding.

It belongs to the flavin monoamine oxidase family. FIG1 subfamily. In terms of assembly, monomer. This is in contrast with most of its orthologs, that are non-covalently linked homodimers. The cofactor is FAD. N-glycosylated. Expressed by the venom gland.

It is found in the secreted. The catalysed reaction is an L-alpha-amino acid + O2 + H2O = a 2-oxocarboxylate + H2O2 + NH4(+). The enzyme catalyses L-leucine + O2 + H2O = 4-methyl-2-oxopentanoate + H2O2 + NH4(+). Catalyzes an oxidative deamination of predominantly hydrophobic and aromatic L-amino acids, thus producing hydrogen peroxide that may contribute to the diverse toxic effects of this enzyme. Shows activity on L-Leu. Exhibits diverse biological activities, such as hemorrhage, hemolysis, edema, antibacterial and antiparasitic activities, as well as regulation of platelet aggregation. When tested on SW480 and SW620 human colon cancer cells, shows inhibition of cell proliferation, and induction of apoptosis, which is probably a consequence of the increased caspase-3 activity and the decreased Bcl-2 expression. This is L-amino oxidase from Trimeresurus purpureomaculatus (Mangrove pit viper).